The primary structure comprises 528 residues: Potassium voltage-gated channel subfamily A member 3 (528 aa).

The tract at residues 1-32 (MTVVPGDHLLEPEAAGGGGGDPPQGGCGSGGG) is disordered. Over 1 to 187 (MTVVPGDHLL…EYPESSGPAR (187 aa)) the chain is Cytoplasmic. Positions 15-32 (AGGGGGDPPQGGCGSGGG) are enriched in gly residues. Residues 188 to 206 (GIAIVSVLVILISIVIFCL) traverse the membrane as a helical segment. At 207 to 247 (ETLPEFRDEKDYPASPSQDVFEAANNSTSGAPSGASSFSDP) the chain is on the extracellular side. N232 is a glycosylation site (N-linked (GlcNAc...) asparagine). The helical transmembrane segment at 248–269 (FFVVETLCIIWFSFELLVRFFA) threads the bilayer. Residue C270 is the site of S-palmitoyl cysteine attachment. Topologically, residues 270 to 280 (CPSKATFSRNI) are cytoplasmic. The chain crosses the membrane as a helical span at residues 281-301 (MNLIDIVAIIPYFITLGTELA). The Extracellular segment spans residues 302–315 (ERQGNGQQAMSLAI). A helical; Voltage-sensor membrane pass occupies residues 316–334 (LRVIRLVRVFRIFKLSRHS). Topologically, residues 335–350 (KGLQILGQTLKASMRE) are cytoplasmic. The chain crosses the membrane as a helical span at residues 351–370 (LGLLIFFLFIGVILFSSAVY). Residues 371 to 411 (FAEADDPSSGFNSIPDAFWWAVVTMTTVGYGDMHPVTIGGK) are Extracellular-facing. The Selectivity filter motif lies at 397–402 (TVGYGD). A helical transmembrane segment spans residues 412–434 (IVGSLCAIAGVLTIALPVPVIVS). Residues 435 to 528 (NFNYFYHRET…VNIKKIFTDV (94 aa)) are Cytoplasmic-facing. The interaction with KCNE4 stretch occupies residues 435–528 (NFNYFYHRET…VNIKKIFTDV (94 aa)). Position 452 is a phosphotyrosine (Y452). S473 bears the Phosphoserine; by PKA mark. Positions 526–528 (TDV) match the PDZ-binding motif.

This sequence belongs to the potassium channel family. A (Shaker) (TC 1.A.1.2) subfamily. Kv1.3/KCNA3 sub-subfamily. In terms of assembly, homotetramer. Forms heterooligomers with KCNE4 which inhibits KCNA3 activity by impairing localization to the cell membrane. The stoichiometry of KCNA3 and KCNE4 in the heterooligomers are 4:1, 4:2, 4:3 or 4:4 respectively. Increasing the number of KCNE4 subunits steadily slows the activation KCNA3 and decreases its abundance at the cell membrane. However, a single subunit of KCNE4 is sufficient for the cooperative enhancement of the inactivating function of the channel. Interacts with SEC24D; this interaction is reduced in the presence of KCNE4. Interacts with DLG1, DLG2 and DLG4 via their PDZ domains. N-glycosylation promotes the cell surface expression. In terms of processing, phosphorylation on Tyr-452 inhibits its channel activity.

It is found in the cell membrane. It catalyses the reaction K(+)(in) = K(+)(out). With respect to regulation, activity is up-regulated by JAK2. In terms of biological role, mediates the voltage-dependent potassium ion permeability of excitable membranes. Assuming opened or closed conformations in response to the voltage difference across the membrane, the protein forms a potassium-selective channel through which potassium ions may pass in accordance with their electrochemical gradient. The polypeptide is Potassium voltage-gated channel subfamily A member 3 (Kcna3) (Mus musculus (Mouse)).